The chain runs to 295 residues: Shikimate dehydrogenase (NADP(+)) (295 aa).

Residues 22 to 24 (SLS) and Ser69 each bind shikimate. Lys73 serves as the catalytic Proton acceptor. Residues Asn94 and Asp111 each coordinate shikimate. NADP(+) contacts are provided by residues 135–139 (GAGGA) and Val236. Tyr238 is a binding site for shikimate. Gly260 is a binding site for NADP(+).

The protein belongs to the shikimate dehydrogenase family. Homodimer.

It carries out the reaction shikimate + NADP(+) = 3-dehydroshikimate + NADPH + H(+). The protein operates within metabolic intermediate biosynthesis; chorismate biosynthesis; chorismate from D-erythrose 4-phosphate and phosphoenolpyruvate: step 4/7. In terms of biological role, involved in the biosynthesis of the chorismate, which leads to the biosynthesis of aromatic amino acids. Catalyzes the reversible NADPH linked reduction of 3-dehydroshikimate (DHSA) to yield shikimate (SA). This is Shikimate dehydrogenase (NADP(+)) from Streptococcus uberis (strain ATCC BAA-854 / 0140J).